We begin with the raw amino-acid sequence, 651 residues long: Probable potassium transport system protein Kup (651 aa).

12 helical membrane passes run 41 to 61 (LVLG…IYAF), 82 to 102 (VVSL…VLFV), 130 to 150 (LILG…VITP), 163 to 183 (IVAP…LVTL), 194 to 214 (VAIV…ASGL), 235 to 255 (FLTV…LAMT), 276 to 296 (WLWI…AFIL), 309 to 329 (MIPS…TVIA), 366 to 386 (IYIP…VLGF), 395 to 415 (AYGI…YIVM), 426 to 446 (ALPI…ANII), and 450 to 470 (EGGW…WTWV).

It belongs to the HAK/KUP transporter (TC 2.A.72) family.

Its subcellular location is the cell inner membrane. It carries out the reaction K(+)(in) + H(+)(in) = K(+)(out) + H(+)(out). Functionally, transport of potassium into the cell. Likely operates as a K(+):H(+) symporter. The protein is Probable potassium transport system protein Kup of Brucella canis (strain ATCC 23365 / NCTC 10854 / RM-666).